The primary structure comprises 168 residues: Lipoprotein signal peptidase (168 aa).

The next 4 helical transmembrane spans lie at 15–35 (WLWL…IVME), 47–67 (VLPF…SFLS), 75–95 (WLFT…MSKL), and 107–127 (AMII…GFVV). Active-site residues include Asp-128 and Asp-146. Residues 141–161 (AFNLADTAICLGAAMIILDGF) traverse the membrane as a helical segment.

This sequence belongs to the peptidase A8 family.

Its subcellular location is the cell inner membrane. The catalysed reaction is Release of signal peptides from bacterial membrane prolipoproteins. Hydrolyzes -Xaa-Yaa-Zaa-|-(S,diacylglyceryl)Cys-, in which Xaa is hydrophobic (preferably Leu), and Yaa (Ala or Ser) and Zaa (Gly or Ala) have small, neutral side chains.. The protein operates within protein modification; lipoprotein biosynthesis (signal peptide cleavage). Its function is as follows. This protein specifically catalyzes the removal of signal peptides from prolipoproteins. The sequence is that of Lipoprotein signal peptidase from Vibrio vulnificus (strain CMCP6).